The following is a 264-amino-acid chain: Diphthine synthase (264 aa).

Residues Leu-10, Asp-87, Val-90, 115–116 (SI), Leu-166, Ala-209, and His-234 each bind S-adenosyl-L-methionine.

Belongs to the diphthine synthase family. Homodimer.

The catalysed reaction is 2-[(3S)-amino-3-carboxypropyl]-L-histidyl-[translation elongation factor 2] + 3 S-adenosyl-L-methionine = diphthine-[translation elongation factor 2] + 3 S-adenosyl-L-homocysteine + 3 H(+). It participates in protein modification; peptidyl-diphthamide biosynthesis. S-adenosyl-L-methionine-dependent methyltransferase that catalyzes the trimethylation of the amino group of the modified target histidine residue in translation elongation factor 2 (EF-2), to form an intermediate called diphthine. The three successive methylation reactions represent the second step of diphthamide biosynthesis. The protein is Diphthine synthase of Thermococcus kodakarensis (strain ATCC BAA-918 / JCM 12380 / KOD1) (Pyrococcus kodakaraensis (strain KOD1)).